Reading from the N-terminus, the 244-residue chain is MRKIIQEKLNEGKVLHFSLFDPDKVDLESIYSIALKLVESGTSGFLIGGTLGVSKEKLDSIIEILEDFEVPKIIFPSNVNLITEKADAILFMSLLNSDDIYYITGAQLIAAPIIKKLKLESLPTGYIIVGHGGTAAHVGKARVIPYDNIELIVAYSIMAELFGMDFVYLEAGSGAPEPIRPSVISITKKYLENSKIIVGGGIRNEEIAKELALAGADIIVTGNIIEQNLEKALKIVKEISNIRR.

Residues Asp21 and Thr50 each contribute to the Mg(2+) site. Residues 168 to 174, 200 to 201, and 222 to 223 contribute to the sn-glycerol 1-phosphate site; these read YLEAGSG, GG, and GN.

The protein belongs to the GGGP/HepGP synthase family. Group II subfamily. Mg(2+) is required as a cofactor.

Its subcellular location is the cytoplasm. The catalysed reaction is sn-glycerol 1-phosphate + (2E,6E,10E)-geranylgeranyl diphosphate = sn-3-O-(geranylgeranyl)glycerol 1-phosphate + diphosphate. The protein operates within membrane lipid metabolism; glycerophospholipid metabolism. Its function is as follows. Prenyltransferase that catalyzes the transfer of the geranylgeranyl moiety of geranylgeranyl diphosphate (GGPP) to the C3 hydroxyl of sn-glycerol-1-phosphate (G1P). This reaction is the first ether-bond-formation step in the biosynthesis of archaeal membrane lipids. The polypeptide is Geranylgeranylglyceryl phosphate synthase (Sulfurisphaera tokodaii (strain DSM 16993 / JCM 10545 / NBRC 100140 / 7) (Sulfolobus tokodaii)).